Reading from the N-terminus, the 269-residue chain is Ubiquinone/menaquinone biosynthesis C-methyltransferase UbiE (269 aa).

S-adenosyl-L-methionine is bound by residues threonine 92, aspartate 113, and asparagine 141–alanine 142.

This sequence belongs to the class I-like SAM-binding methyltransferase superfamily. MenG/UbiE family.

The catalysed reaction is a 2-demethylmenaquinol + S-adenosyl-L-methionine = a menaquinol + S-adenosyl-L-homocysteine + H(+). It carries out the reaction a 2-methoxy-6-(all-trans-polyprenyl)benzene-1,4-diol + S-adenosyl-L-methionine = a 5-methoxy-2-methyl-3-(all-trans-polyprenyl)benzene-1,4-diol + S-adenosyl-L-homocysteine + H(+). It participates in quinol/quinone metabolism; menaquinone biosynthesis; menaquinol from 1,4-dihydroxy-2-naphthoate: step 2/2. Its pathway is cofactor biosynthesis; ubiquinone biosynthesis. Methyltransferase required for the conversion of demethylmenaquinol (DMKH2) to menaquinol (MKH2) and the conversion of 2-polyprenyl-6-methoxy-1,4-benzoquinol (DDMQH2) to 2-polyprenyl-3-methyl-6-methoxy-1,4-benzoquinol (DMQH2). This is Ubiquinone/menaquinone biosynthesis C-methyltransferase UbiE from Brucella canis (strain ATCC 23365 / NCTC 10854 / RM-666).